The following is a 1006-amino-acid chain: DNA ligase 4 (1006 aa).

Positions 1 to 36 are disordered; that stretch reads MDSDDDYNGPADTNPRLEDEESDLDEKYPNRPRNHS. ATP-binding residues include glutamate 318, lysine 320, leucine 321, arginine 325, glutamate 387, phenylalanine 427, glutamate 487, lysine 492, lysine 509, and lysine 511. Catalysis depends on lysine 320, which acts as the N6-AMP-lysine intermediate. Glutamate 387 provides a ligand contact to Mg(2+). Glutamate 487 serves as a coordination point for Mg(2+). 2 BRCT domains span residues 718-811 and 890-1002; these read PSGN…PDSL and PSGW…GFQP.

Belongs to the ATP-dependent DNA ligase family. Requires Mg(2+) as cofactor.

The protein localises to the nucleus. The catalysed reaction is ATP + (deoxyribonucleotide)n-3'-hydroxyl + 5'-phospho-(deoxyribonucleotide)m = (deoxyribonucleotide)n+m + AMP + diphosphate.. Its function is as follows. DNA ligase involved in DNA non-homologous end joining (NHEJ); required for double-strand break (DSB) repair. The polypeptide is DNA ligase 4 (lig4) (Aspergillus oryzae (strain ATCC 42149 / RIB 40) (Yellow koji mold)).